We begin with the raw amino-acid sequence, 162 residues long: UPF0305 protein MmarC7_1691 (162 aa).

The protein belongs to the UPF0305 family.

The protein is UPF0305 protein MmarC7_1691 of Methanococcus maripaludis (strain C7 / ATCC BAA-1331).